The primary structure comprises 119 residues: Non-structural protein 3b (119 aa).

The DRBM domain maps to 3-79 (YVSLLNQVWQ…AARKVCLRLQ (77 aa)).

In terms of assembly, interacts with host RUNX1 isoform b.

It is found in the host nucleus. Its subcellular location is the host nucleolus. It localises to the host mitochondrion. In terms of biological role, induces host cell G0/G1 arrest and apoptosis. In Pipistrellus abramus (Japanese pipistrelle), this protein is Non-structural protein 3b.